Reading from the N-terminus, the 396-residue chain is MSIRIKLKPGREKSLDRRHPWVFSSGVHNIKGKPLRGETVDVVAHDGRWLGRGAWSDASQIQVRVWTFDKEEAIDRDFFARRIARAQAGREALIREKGLTGYRLVGAESDGLPGITIDRYANVLVCQLLSAGADYWRETLVSVLAEQFPECAIYERSDVDSRKKEGLPLVTGLLHGELPAMPLIIEENGIKIAVDVEKGHKTGFYLDQRDNRAMAGRFVEGKSVLNCFCYTGTFGLYAAKAGAASIENVDVSTLALDTARHNMAINGLNDDHVTYSEADVFKLLRQYRDEGKTFDVIVLDPPKFADNKAQLNGACRGYKDINMIAMQLLKPGGTLLTFSCSGLMPADLFQKIVADAALDAGRDAQFIERLSQASDHPIGAAFPEGFYLKGLVARVW.

One can recognise a PUA domain in the interval 2–79 (SIRIKLKPGR…KEEAIDRDFF (78 aa)).

It belongs to the methyltransferase superfamily. RlmI family.

The protein localises to the cytoplasm. It carries out the reaction cytidine(1962) in 23S rRNA + S-adenosyl-L-methionine = 5-methylcytidine(1962) in 23S rRNA + S-adenosyl-L-homocysteine + H(+). Functionally, specifically methylates the cytosine at position 1962 (m5C1962) of 23S rRNA. This Shewanella amazonensis (strain ATCC BAA-1098 / SB2B) protein is Ribosomal RNA large subunit methyltransferase I.